Reading from the N-terminus, the 355-residue chain is Green-sensitive opsin-1 (355 aa).

The Extracellular segment spans residues 1–49 (MAAHADEPVFAARRYNEETTRESAFVYTNANNTRDPFEGPNYHIAPRWV). N31 carries an N-linked (GlcNAc...) asparagine glycan. A helical membrane pass occupies residues 50–74 (YNLASLWMIIVVIASIFTNSLVIVA). The Cytoplasmic portion of the chain corresponds to 75 to 86 (TAKFKKLRHPLN). A helical membrane pass occupies residues 87 to 112 (WILVNLAIADLGETVLASTISVFNQV). Topologically, residues 113-126 (FGYFVLGHPMCIFE) are extracellular. A disulfide bridge links C123 with C200. The helical transmembrane segment at 127 to 146 (GWTVSVCGITALWSLTIISW) threads the bilayer. Topologically, residues 147-165 (ERWVVVCKPFGNVKFDGKW) are cytoplasmic. Residues 166–189 (AAGGIIFAWTWAIIWCTPPIFGWS) form a helical membrane-spanning segment. Over 190 to 215 (RYWPHGLKTSCGPDVFSGSEDPGVAS) the chain is Extracellular. The helical transmembrane segment at 216–243 (YMVTLLLTCCILPLSVIIICYIFVWNAI) threads the bilayer. Residues 244 to 265 (HQVAQQQKDSESTQKAEKEVSR) are Cytoplasmic-facing. The chain crosses the membrane as a helical span at residues 266–289 (MVVVMILAFILCWGPYASFATFSA). Residues 290 to 297 (LNPGYAWH) are Extracellular-facing. Residues 298-322 (PLAAALPAYFAKSATIYNPIIYVFM) traverse the membrane as a helical segment. At K309 the chain carries N6-(retinylidene)lysine. Residues 323–355 (NRQFRSCIMQLFGKKVEDASEVSGSTTEVSTAS) lie on the Cytoplasmic side of the membrane.

It belongs to the G-protein coupled receptor 1 family. Opsin subfamily. The color pigments are found in the cone photoreceptor cells.

The protein localises to the membrane. In terms of biological role, visual pigments are the light-absorbing molecules that mediate vision. They consist of an apoprotein, opsin, covalently linked to cis-retinal. The polypeptide is Green-sensitive opsin-1 (G103) (Psalidodon fasciatus (Banded astyanax)).